A 303-amino-acid chain; its full sequence is Olfactory receptor 4X2 (303 aa).

Over 1–17 the chain is Extracellular; that stretch reads MTEFIFLVLSPNQEVQR. Residues 18-41 traverse the membrane as a helical segment; that stretch reads VCFVIFLFLYTAIVLGNFLIVLTV. Residues 42 to 49 lie on the Cytoplasmic side of the membrane; sequence MTSRSLGS. The chain crosses the membrane as a helical span at residues 50–71; sequence PMYFFLSYLSFMEICYSSATAP. Topologically, residues 72-92 are extracellular; that stretch reads KLISDLLAERKVISWWGCMAQ. Cys-89 and Cys-181 are joined by a disulfide. A helical membrane pass occupies residues 93–112; the sequence is LFFLHFFGGTEIFLLTVMAY. Residues 113-131 lie on the Cytoplasmic side of the membrane; sequence DHYVAICKPLSYTTIMNWQ. A helical transmembrane segment spans residues 132-150; that stretch reads VCTVLVGIAWVGGFMHSFA. The Extracellular segment spans residues 151–187; sequence QILLIFHLLFCGPNVINHYFCDLVPLLKLACSDTFLI. The helical transmembrane segment at 188–211 threads the bilayer; it reads GLLIVANGGTLSVISFGVLLASYM. The Cytoplasmic segment spans residues 212–227; sequence VILLHLRTWSSEGWCK. The helical transmembrane segment at 228–250 threads the bilayer; the sequence is ALSTCGSHFAVVILFFGPCVFNS. The Extracellular segment spans residues 251 to 261; it reads LRPSTTLPIDK. A helical transmembrane segment spans residues 262-281; the sequence is MVAVFYTVITAILNPVIYSL. Topologically, residues 282 to 303 are cytoplasmic; that stretch reads RNAEMRKAMKRLWIRTLRLNEK.

The protein belongs to the G-protein coupled receptor 1 family.

It localises to the cell membrane. In terms of biological role, odorant receptor. The protein is Olfactory receptor 4X2 (OR4X2) of Homo sapiens (Human).